The sequence spans 131 residues: Inactive protein FON2 SPARE1 (131 aa).

The interval 67 to 131 (SPSSLTTTDR…VPTGPNPLHH (65 aa)) is disordered. Over residues 76-97 (RHHHHHRHHGHHHHRGHDRWNR) the composition is skewed to basic residues.

This sequence belongs to the CLV3/ESR signal peptide family. Expressed in all aerial apical meristems, including the floral and inflorescence meristems in the reproductive phase and the shoot apical meristem in the vegetative phase. Also detected in the primordia of lateral organs such as the leaf and the floral organs.

Functionally, non functional suppressor of the fon2 mutation. In Oryza sativa subsp. japonica, the protein has a single amino acid substitution at the putative processing site of the signal peptide while in all the other varieties/species of domesticated and wild rice tested the protein is functional. The protein is Inactive protein FON2 SPARE1 (FOS1) of Oryza sativa subsp. japonica (Rice).